A 321-amino-acid chain; its full sequence is Phosphatidate cytidylyltransferase, mitochondrial (321 aa).

Belongs to the TAM41 family. Mg(2+) serves as cofactor. Co(2+) is required as a cofactor. It depends on Cu(2+) as a cofactor.

The protein localises to the mitochondrion inner membrane. The enzyme catalyses a 1,2-diacyl-sn-glycero-3-phosphate + CTP + H(+) = a CDP-1,2-diacyl-sn-glycerol + diphosphate. It participates in phospholipid metabolism; CDP-diacylglycerol biosynthesis; CDP-diacylglycerol from sn-glycerol 3-phosphate: step 3/3. In terms of biological role, catalyzes the formation of CDP-diacylglycerol (CDP-DAG) from phosphatidic acid (PA) in the mitochondrial inner membrane. Required for the biosynthesis of the dimeric phospholipid cardiolipin, which stabilizes supercomplexes of the mitochondrial respiratory chain in the mitochondrial inner membrane. The protein is Phosphatidate cytidylyltransferase, mitochondrial of Caenorhabditis briggsae.